The primary structure comprises 200 residues: Recombination protein RecR (200 aa).

The C4-type zinc-finger motif lies at 58–75 (CPTCFCLKSHPESVCSFC). The region spanning 82–177 (SILCIVATPK…SVSRLALGLP (96 aa)) is the Toprim domain.

This sequence belongs to the RecR family.

Functionally, may play a role in DNA repair. It seems to be involved in an RecBC-independent recombinational process of DNA repair. It may act with RecF and RecO. This Chlamydia abortus (strain DSM 27085 / S26/3) (Chlamydophila abortus) protein is Recombination protein RecR.